The following is a 266-amino-acid chain: 5'-nucleotidase SurE (266 aa).

A divalent metal cation-binding residues include Asp-8, Asp-9, Ser-39, and Asn-95.

Belongs to the SurE nucleotidase family. A divalent metal cation serves as cofactor.

It localises to the cytoplasm. It catalyses the reaction a ribonucleoside 5'-phosphate + H2O = a ribonucleoside + phosphate. Functionally, nucleotidase that shows phosphatase activity on nucleoside 5'-monophosphates. The chain is 5'-nucleotidase SurE from Syntrophus aciditrophicus (strain SB).